The sequence spans 297 residues: MKRPDYRTLQALDAVIRERGFERAAQKLCITQSAVSQRIKQLENMFGQPLLVRTVPPRPTEQGQKLLALLRQVELLEDEWLGDEQTGSTPLLLSLAVNADSLATWLLPALAPVLADSPIRLNLQVEDETRTQERLRRGEVVGAVSIQHQALPSCLVDKLGALDYLFVGSKPFAERYFPNGVTRSALLKAPAVAFDHLDDMHQAFLQQNFDLPPGSVPCHIVNSSEAFVQLARQGTTCCMIPHLQIEKELESGELIDLTPGLFQRRMLYWHRFAPESRMMRNVTDALLEYGHKVLRQD.

Positions 4–60 (PDYRTLQALDAVIRERGFERAAQKLCITQSAVSQRIKQLENMFGQPLLVRTVPPRPT) constitute an HTH lysR-type domain. The segment at residues 21–40 (FERAAQKLCITQSAVSQRIK) is a DNA-binding region (H-T-H motif).

The protein belongs to the LysR transcriptional regulatory family. Homodimer.

Controls the transcription of genes involved in arginine and lysine metabolism. The sequence is that of HTH-type transcriptional regulator ArgP from Citrobacter koseri (strain ATCC BAA-895 / CDC 4225-83 / SGSC4696).